We begin with the raw amino-acid sequence, 313 residues long: Ornithine carbamoyltransferase (313 aa).

Residues 57–60, glutamine 84, arginine 108, and 135–138 each bind carbamoyl phosphate; these read STRT and HPCQ. L-ornithine contacts are provided by residues asparagine 166, aspartate 230, and 234–235; that span reads SM. Carbamoyl phosphate-binding positions include 270 to 271 and arginine 298; that span reads CL.

Belongs to the aspartate/ornithine carbamoyltransferase superfamily. OTCase family. Homohexamer.

The protein localises to the cytoplasm. The catalysed reaction is carbamoyl phosphate + L-ornithine = L-citrulline + phosphate + H(+). Its pathway is amino-acid biosynthesis; L-arginine biosynthesis; L-arginine from L-ornithine and carbamoyl phosphate: step 1/3. Functionally, reversibly catalyzes the transfer of the carbamoyl group from carbamoyl phosphate (CP) to the N(epsilon) atom of ornithine (ORN) to produce L-citrulline. The protein is Ornithine carbamoyltransferase of Gloeobacter violaceus (strain ATCC 29082 / PCC 7421).